The sequence spans 161 residues: MSEISTALSLENCPCQSSHHYADCCGKFHLRQAFPETAEQLMRSRYTAYVLKNIPYIVVTTAPSQQTLLKPRLLQEWADNTTWLGLEILKTESLTKTQSAVEFKAIFQGEEGELAHQERSIFVKIENRWYFVDPTVSLPTMKQPCVCGYGKKFKHCCGGFL.

It belongs to the UPF0225 family.

The polypeptide is UPF0225 protein NTHI0386 (Haemophilus influenzae (strain 86-028NP)).